Reading from the N-terminus, the 898-residue chain is Protein SOV1, mitochondrial (898 aa).

The N-terminal 31 residues, 1-31, are a transit peptide targeting the mitochondrion; sequence MFKYNRSLCSSALIAKSQIRFYRLKRAPLNY.

The protein resides in the mitochondrion. The polypeptide is Protein SOV1, mitochondrial (SOV1) (Saccharomyces cerevisiae (strain ATCC 204508 / S288c) (Baker's yeast)).